We begin with the raw amino-acid sequence, 1695 residues long: Sialoadhesin (1695 aa).

The N-terminal stretch at 1-19 (MCVLFSLLLLASVFSLGQT) is a signal peptide. The Ig-like V-type domain maps to 20-136 (TWGVSSPKNV…DVKGTTVTVT (117 aa)). The Extracellular segment spans residues 20–1639 (TWGVSSPKNV…ALHQLQLFQR (1620 aa)). Intrachain disulfides connect C36/C166, C41/C98, C160/C218, and C263/C306. N-acetylneuraminate contacts are provided by residues Y63, R116, and 122–126 (SNRWL). Ig-like C2-type domains lie at 153–235 (GMER…YLQV), 239–321 (PKGV…SPLS), 326–406 (MAEV…SPLS), 416–508 (PDLT…LDFY), 509–594 (ANVA…TVLT), 602–701 (PTFT…ASFN), 704–781 (ATVL…AQLS), 795–890 (PKLS…FQVR), 894–973 (VQVS…APVS), 980–1079 (PRHV…ADFD), 1081–1161 (QAVR…RPVT), 1172–1264 (RLTY…MNPS), 1245–1337 (KANT…ASLQ), 1342–1439 (PRDA…RLLT), 1442–1520 (DIRV…ATTS), and 1534–1627 (PTLI…AYFG). The N-linked (GlcNAc...) asparagine glycan is linked to N159. N-linked (GlcNAc...) asparagine glycosylation is found at N266, N299, and N340. Disulfide bonds link C347–C391 and C434–C492. An N-linked (GlcNAc...) asparagine glycan is attached at N500. A disulfide bridge connects residues C532 and C576. N583 carries N-linked (GlcNAc...) asparagine glycosylation. A disulfide bond links C625 and C685. Residues N693, N722, and N737 are each glycosylated (N-linked (GlcNAc...) asparagine). Intrachain disulfides connect C725-C770 and C813-C872. The Cell attachment site motif lies at 827–829 (RGD). N882 carries an N-linked (GlcNAc...) asparagine glycan. 2 cysteine pairs are disulfide-bonded: C912–C956 and C1001–C1063. N1090 and N1100 each carry an N-linked (GlcNAc...) asparagine glycan. 2 disulfide bridges follow: C1103-C1145 and C1189-C1237. An N-linked (GlcNAc...) asparagine glycan is attached at N1247. 2 disulfide bridges follow: C1277–C1320 and C1363–C1422. 2 N-linked (GlcNAc...) asparagine glycosylation sites follow: N1460 and N1474. 2 disulfide bridges follow: C1463–C1509 and C1552–C1611. Residues 1640 to 1660 (LLWVLGFLAGFLCLLLGLVAY) form a helical membrane-spanning segment. Residues 1661–1695 (HTWRKKSSTKLNEDENSAEMATKKNTIQEEVVAAL) lie on the Cytoplasmic side of the membrane.

This sequence belongs to the immunoglobulin superfamily. SIGLEC (sialic acid binding Ig-like lectin) family. As to quaternary structure, interacts with CLEC10A. Detected in lymph node in the subcapsular sinus, interfollicular regions, and T and B-cell boundary (at protein level). Expressed by macrophages in various tissues. Highest expression in spleen and lymph node with lower amounts in lung, liver, bone marrow, heart and skin. No expression in thymus, kidney, brain or small intestine.

Its subcellular location is the cell membrane. The protein resides in the secreted. In terms of biological role, macrophage-restricted adhesion molecule that mediates sialic-acid dependent binding to lymphocytes, including granulocytes, monocytes, natural killer cells, B-cells and CD8 T-cells. Plays a crucial role in limiting bacterial dissemination by engaging sialylated bacteria to promote effective phagocytosis and antigen presentation for the adaptive immune response. Mediates the uptake of various enveloped viruses via sialic acid recognition and subsequently induces the formation of intracellular compartments filled with virions (VCCs). In turn, enhances macrophage-to-T-cell transmission of several viruses including murine leukemia virus. Acts as an endocytic receptor mediating clathrin dependent endocytosis. Preferentially binds to alpha-2,3-linked sialic acid. Binds to SPN/CD43 on T-cells. May play a role in hemopoiesis. Plays a role in the inhibition of antiviral innate immune by promoting TBK1 degradation via TYROBP and TRIM27-mediated ubiquitination. The sequence is that of Sialoadhesin (Siglec1) from Mus musculus (Mouse).